We begin with the raw amino-acid sequence, 105 residues long: Phosphoribosyl-ATP pyrophosphatase (105 aa).

The protein belongs to the PRA-PH family.

It is found in the cytoplasm. The catalysed reaction is 1-(5-phospho-beta-D-ribosyl)-ATP + H2O = 1-(5-phospho-beta-D-ribosyl)-5'-AMP + diphosphate + H(+). It functions in the pathway amino-acid biosynthesis; L-histidine biosynthesis; L-histidine from 5-phospho-alpha-D-ribose 1-diphosphate: step 2/9. The protein is Phosphoribosyl-ATP pyrophosphatase of Roseobacter denitrificans (strain ATCC 33942 / OCh 114) (Erythrobacter sp. (strain OCh 114)).